The primary structure comprises 332 residues: MKIVFAGTPEFAAQAVRAIHAAGHEIVLAFTQPDRRAGRGMHLQASPVKEFALQKNIPILQPETLRRTSADPQKKAQAEEAYKSLSAIEFDAMVVVAYGLILPQEILDITEKPGRHGSFNIHASLLPRWRGAAPIQRAIEAGDAKTGVCIMQMDAGLDTGDTVLVVELDIARDETSASLHDRLAGLGADLIVNALDVLQQGKTMIRSPQAIKGITYAEKILKSEAEIDWTLSAQEIDQRIRAFNPFPGASSKLNGYAIKLWNSRLADSQAFSMVGGAGDVLEFGRDGAYIQCGEGVLEVLEMQKPGGKKMAAKACIQPIGAGEKLLHFQLKE.

Position 124–127 (124–127 (SLLP)) interacts with (6S)-5,6,7,8-tetrahydrofolate.

The protein belongs to the Fmt family.

It catalyses the reaction L-methionyl-tRNA(fMet) + (6R)-10-formyltetrahydrofolate = N-formyl-L-methionyl-tRNA(fMet) + (6S)-5,6,7,8-tetrahydrofolate + H(+). Attaches a formyl group to the free amino group of methionyl-tRNA(fMet). The formyl group appears to play a dual role in the initiator identity of N-formylmethionyl-tRNA by promoting its recognition by IF2 and preventing the misappropriation of this tRNA by the elongation apparatus. This is Methionyl-tRNA formyltransferase from Polynucleobacter necessarius subsp. necessarius (strain STIR1).